Reading from the N-terminus, the 271-residue chain is UPF0758 protein ACIAD3126 (271 aa).

Residues 120–242 enclose the MPN domain; that stretch reads NLNSSRLVLD…TFSFAERALL (123 aa). The Zn(2+) site is built by His191, His193, and Asp204. Residues 191–204 carry the JAMM motif motif; that stretch reads HNHPFGKAEPSAAD.

The protein belongs to the UPF0758 family.

The chain is UPF0758 protein ACIAD3126 from Acinetobacter baylyi (strain ATCC 33305 / BD413 / ADP1).